Reading from the N-terminus, the 92-residue chain is 11 kDa excretory-secretory protein (92 aa).

The protein is 11 kDa excretory-secretory protein of Trichostrongylus colubriformis (Black scour worm).